Here is a 654-residue protein sequence, read N- to C-terminus: Kelch-like protein 13 (654 aa).

The BTB domain maps to 91 to 160 (CDVTLMPGDT…IYTAKLSLNM (70 aa)). A BACK domain is found at 195-296 (CVEVGRIANT…TPQELINYVQ (102 aa)). Kelch repeat units lie at residues 340–388 (RLVT…VIGN), 389–440 (FLYV…ALKG), 441–487 (FLYA…VYGG), 489–534 (MYIS…TVGD), 536–586 (LYVI…VFEN), and 587–635 (KIYV…TLTV).

Component of the BCR(KLHL9-KLHL13) E3 ubiquitin ligase complex, at least composed of CUL3, KLHL9, KLHL13 and RBX1. Interacts with AURKB.

It participates in protein modification; protein ubiquitination. In terms of biological role, substrate-specific adapter of a BCR (BTB-CUL3-RBX1) E3 ubiquitin-protein ligase complex required for mitotic progression and cytokinesis. The BCR(KLHL9-KLHL13) E3 ubiquitin ligase complex mediates the ubiquitination of AURKB and controls the dynamic behavior of AURKB on mitotic chromosomes and thereby coordinates faithful mitotic progression and completion of cytokinesis. This Mus musculus (Mouse) protein is Kelch-like protein 13 (Klhl13).